The sequence spans 879 residues: DNA mismatch repair protein MutS (879 aa).

ATP is bound at residue 639–646 (GPNMGGKS).

It belongs to the DNA mismatch repair MutS family.

Functionally, this protein is involved in the repair of mismatches in DNA. It is possible that it carries out the mismatch recognition step. This protein has a weak ATPase activity. This Aromatoleum aromaticum (strain DSM 19018 / LMG 30748 / EbN1) (Azoarcus sp. (strain EbN1)) protein is DNA mismatch repair protein MutS.